A 458-amino-acid polypeptide reads, in one-letter code: MGSAIDFDLDGHLDILGQQPLLQMYTQICFAFPVADSSSYSAITKTLADGLERLSASFPWVAGHIVNEDSGEGNTGVFKIKPLDKSPSLIVKDFRNDPSFPTMEAIKKAGFPFSMLNEDIIAPRKTLPVRSDTPEISPVLVVQADLITGGLLLVFAGQHNAMDMTGQGQVIHLFSKACRNEPFTSDELVSGNLDRRTLVPLLDDSYKQGHELARQISQPRPPPSSDGPPPPKLDWTYILFSPTSLAELKSLAQKTITFPSSFISTDDTLSAFVWQAVARSRLPRFDASAKTTCARAVDVRSYLGVPSTYTGLLQNVTYDTFTLQKLVNEPLGSVASALRSGLDPKRPNDLGFSTRALVTVLSRTLDKNTFSFGGTVNPSLDFMVSSWAKLDSYELDFGLGLGKPEGVRRPQFQPLESLGFLMPKTQDGEIAFALCLMEEDMKRLRADEEFTKYGVFVG.

The tract at residues 211–231 is disordered; sequence ELARQISQPRPPPSSDGPPPP. Over residues 219–231 the composition is skewed to pro residues; sequence PRPPPSSDGPPPP.

This sequence belongs to the trichothecene 3-O-acetyltransferase family.

It functions in the pathway secondary metabolite biosynthesis. In terms of biological role, O-acetyltransferase; part of the gene cluster that mediates the biosynthesis of the dimeric xanthones cryptosporioptides. The pathway begins with the synthesis of atrochrysone thioester by the polyketide synthase dmx-nrPKS. The atrochrysone carboxyl ACP thioesterase dmxR1 then breaks the thioester bond and releases the atrochrysone carboxylic acid from dmx-nrPKS. Atrochrysone carboxylic acid is decarboxylated by the decarboxylase dmxR15, and oxidized by the anthrone oxygenase dmxR16 to yield emodin. Emodin is then reduced to emodin hydroquinone by the oxidoreductase dmxR7. A-ring reduction by the short chain dehydrogenase dmxR18, dehydration by the scytalone dehydratase-like protein dmxR17 and probable spontaneous re-oxidation, results in overall deoxygenation to chrysophanol. Baeyer-Villiger oxidation by the Baeyer-Villiger monooxygenase (BVMO) dmxR6 then yields monodictylactone in equilibrium with monodictyphenone. In the case of the cryptosporioptides biosynthesis, monodictylactone is reduced at C-12 to an alcohol (by the short chain dehydrogenases dmxR12 or dmxR8) and hydroxylated at C-5 by dmxR9, yielding the electron-rich aromatic which could eliminate H(2)O to form the ortho-quinonemethide, followed by tautomerisation to paraquinone and complete the formal reduction to produce the 10-methylgroup. Conjugate addition of C-4a-OH to the resulting paraquinone by the monooxygenase dmxR10 then gives cyclohexadienone, which is then reduced at C-5 by the short chain dehydrogenase dmxR3 to give the dihydroxanthone. The 6,7-epoxide in the cryptosporioptides could be introduced by the cytochrome P450 monooxygenase dmxL3. The highly reducing PKS dmxL2 manufactures butyrate, which is further carboxylated by dmxL1 to form ethylmalonate. It is not yet clear whether the carboxylation occurs while the butyrate is attached to the ACP of dmxL2, but this unusual fungal metabolite could then be esterified to O-5 by the O-acetyltransferase dmxR13. Finally, dimerization performed by dmxR5 gives the observed dimers cryptosporioptides A, B and C as the final products of the pathway. The polypeptide is O-acetyltransferase dmxR13 (Cryptosporiopsis sp. (strain 8999)).